Consider the following 317-residue polypeptide: Acetyl-coenzyme A carboxylase carboxyl transferase subunit alpha (317 aa).

One can recognise a CoA carboxyltransferase C-terminal domain in the interval 40–293 (LEVRVREAIL…GDVIANALAE (254 aa)).

The protein belongs to the AccA family. Acetyl-CoA carboxylase is a heterohexamer composed of biotin carboxyl carrier protein (AccB), biotin carboxylase (AccC) and two subunits each of ACCase subunit alpha (AccA) and ACCase subunit beta (AccD).

Its subcellular location is the cytoplasm. The enzyme catalyses N(6)-carboxybiotinyl-L-lysyl-[protein] + acetyl-CoA = N(6)-biotinyl-L-lysyl-[protein] + malonyl-CoA. The protein operates within lipid metabolism; malonyl-CoA biosynthesis; malonyl-CoA from acetyl-CoA: step 1/1. Functionally, component of the acetyl coenzyme A carboxylase (ACC) complex. First, biotin carboxylase catalyzes the carboxylation of biotin on its carrier protein (BCCP) and then the CO(2) group is transferred by the carboxyltransferase to acetyl-CoA to form malonyl-CoA. The protein is Acetyl-coenzyme A carboxylase carboxyl transferase subunit alpha of Rhizobium etli (strain CIAT 652).